The sequence spans 255 residues: Phosphoribosyl isomerase A (255 aa).

Asp-21 (proton acceptor) is an active-site residue. Residue Asp-140 is the Proton donor of the active site.

It belongs to the HisA/HisF family.

The protein resides in the cytoplasm. It carries out the reaction 1-(5-phospho-beta-D-ribosyl)-5-[(5-phospho-beta-D-ribosylamino)methylideneamino]imidazole-4-carboxamide = 5-[(5-phospho-1-deoxy-D-ribulos-1-ylimino)methylamino]-1-(5-phospho-beta-D-ribosyl)imidazole-4-carboxamide. It catalyses the reaction N-(5-phospho-beta-D-ribosyl)anthranilate = 1-(2-carboxyphenylamino)-1-deoxy-D-ribulose 5-phosphate. It participates in amino-acid biosynthesis; L-histidine biosynthesis; L-histidine from 5-phospho-alpha-D-ribose 1-diphosphate: step 4/9. The protein operates within amino-acid biosynthesis; L-tryptophan biosynthesis; L-tryptophan from chorismate: step 3/5. Its function is as follows. Involved in both the histidine and tryptophan biosynthetic pathways. In Mycolicibacterium vanbaalenii (strain DSM 7251 / JCM 13017 / BCRC 16820 / KCTC 9966 / NRRL B-24157 / PYR-1) (Mycobacterium vanbaalenii), this protein is Phosphoribosyl isomerase A.